Here is a 35-residue protein sequence, read N- to C-terminus: Photosystem II reaction center protein T (35 aa).

Residues 3 to 23 (SVAYILIFTLCIGTIFFAIAF) traverse the membrane as a helical segment.

It belongs to the PsbT family. In terms of assembly, PSII is composed of 1 copy each of membrane proteins PsbA, PsbB, PsbC, PsbD, PsbE, PsbF, PsbH, PsbI, PsbJ, PsbK, PsbL, PsbM, PsbT, PsbX, PsbY, PsbZ, Psb30/Ycf12, peripheral proteins PsbO, CyanoQ (PsbQ), PsbU, PsbV and a large number of cofactors. It forms dimeric complexes.

It localises to the cellular thylakoid membrane. Functionally, found at the monomer-monomer interface of the photosystem II (PS II) dimer, plays a role in assembly and dimerization of PSII. PSII is a light-driven water plastoquinone oxidoreductase, using light energy to abstract electrons from H(2)O, generating a proton gradient subsequently used for ATP formation. This Nostoc punctiforme (strain ATCC 29133 / PCC 73102) protein is Photosystem II reaction center protein T.